Reading from the N-terminus, the 329-residue chain is DNA-directed RNA polymerase subunit alpha (329 aa).

Positions 1–235 (MQGSVTEFLK…EQLDAFVDLR (235 aa)) are alpha N-terminal domain (alpha-NTD). Residues 249-329 (FDPILLRPVD…NWPPASIAED (81 aa)) are alpha C-terminal domain (alpha-CTD).

The protein belongs to the RNA polymerase alpha chain family. In terms of assembly, homodimer. The RNAP catalytic core consists of 2 alpha, 1 beta, 1 beta' and 1 omega subunit. When a sigma factor is associated with the core the holoenzyme is formed, which can initiate transcription.

The enzyme catalyses RNA(n) + a ribonucleoside 5'-triphosphate = RNA(n+1) + diphosphate. Its function is as follows. DNA-dependent RNA polymerase catalyzes the transcription of DNA into RNA using the four ribonucleoside triphosphates as substrates. In Pasteurella multocida (strain Pm70), this protein is DNA-directed RNA polymerase subunit alpha.